The sequence spans 240 residues: Large ribosomal subunit protein uL3 (240 aa).

2 disordered regions span residues S138–K158 and E215–G240. Position 151 is an N5-methylglutamine (Q151).

It belongs to the universal ribosomal protein uL3 family. In terms of assembly, part of the 50S ribosomal subunit. Forms a cluster with proteins L14 and L19. Methylated by PrmB.

Its function is as follows. One of the primary rRNA binding proteins, it binds directly near the 3'-end of the 23S rRNA, where it nucleates assembly of the 50S subunit. The polypeptide is Large ribosomal subunit protein uL3 (Beijerinckia indica subsp. indica (strain ATCC 9039 / DSM 1715 / NCIMB 8712)).